We begin with the raw amino-acid sequence, 294 residues long: Sulfotransferase 1E1 (294 aa).

47 to 52 is a 3'-phosphoadenylyl sulfate binding site; it reads KSGTTW. Residue 105 to 107 coordinates substrate; it reads KTH. His-107 (proton acceptor) is an active-site residue. Residues Arg-129, Ser-137, Tyr-192, 226–231, and 256–258 contribute to the 3'-phosphoadenylyl sulfate site; these read TSFQEM and RKG.

Belongs to the sulfotransferase 1 family. As to quaternary structure, homodimer. As to expression, liver, intestine and at lower level in the kidney.

It localises to the cytoplasm. It is found in the cytosol. The enzyme catalyses estrone + 3'-phosphoadenylyl sulfate = estrone 3-sulfate + adenosine 3',5'-bisphosphate + H(+). It carries out the reaction (24S)-hydroxycholesterol + 3'-phosphoadenylyl sulfate = (24S)-hydroxycholesterol 3-sulfate + adenosine 3',5'-bisphosphate + H(+). The catalysed reaction is 17beta-estradiol + 3'-phosphoadenylyl sulfate = 17beta-estradiol 3-sulfate + adenosine 3',5'-bisphosphate + H(+). It catalyses the reaction 3beta-hydroxyandrost-5-en-17-one + 3'-phosphoadenylyl sulfate = dehydroepiandrosterone 3-sulfate + adenosine 3',5'-bisphosphate + H(+). The enzyme catalyses 4-ethylphenol + 3'-phosphoadenylyl sulfate = 4-ethylphenyl sulfate + adenosine 3',5'-bisphosphate + H(+). With respect to regulation, inhibited by estradiol. Functionally, sulfotransferase that utilizes 3'-phospho-5'-adenylyl sulfate (PAPS) as sulfonate donor to catalyze the sulfate conjugation of estradiol and estrone. Is a key enzyme in estrogen homeostasis, the sulfation of estrogens leads to their inactivation. Also sulfates dehydroepiandrosterone (DHEA), pregnenolone, (24S)-hydroxycholesterol and xenobiotic compounds like ethinylestradiol, equalenin, diethyl stilbesterol and 1-naphthol at significantly lower efficiency. Does not sulfonate cortisol, testosterone and dopamine. May play a role in gut microbiota-host metabolic interaction. O-sulfonates 4-ethylphenol (4-EP), a dietary tyrosine-derived metabolite produced by gut bacteria. The product 4-EPS crosses the blood-brain barrier and may negatively regulate oligodendrocyte maturation and myelination, affecting the functional connectivity of different brain regions associated with the limbic system. The sequence is that of Sulfotransferase 1E1 (SULT1E1) from Homo sapiens (Human).